The chain runs to 360 residues: Phosphoserine aminotransferase (360 aa).

Arginine 41 is a binding site for L-glutamate. Pyridoxal 5'-phosphate contacts are provided by tryptophan 101, threonine 152, aspartate 172, and glutamine 195. Lysine 196 carries the N6-(pyridoxal phosphate)lysine modification. 237–238 (NT) contacts pyridoxal 5'-phosphate.

This sequence belongs to the class-V pyridoxal-phosphate-dependent aminotransferase family. SerC subfamily. In terms of assembly, homodimer. Pyridoxal 5'-phosphate serves as cofactor.

The protein localises to the cytoplasm. The enzyme catalyses O-phospho-L-serine + 2-oxoglutarate = 3-phosphooxypyruvate + L-glutamate. The catalysed reaction is 4-(phosphooxy)-L-threonine + 2-oxoglutarate = (R)-3-hydroxy-2-oxo-4-phosphooxybutanoate + L-glutamate. Its pathway is amino-acid biosynthesis; L-serine biosynthesis; L-serine from 3-phospho-D-glycerate: step 2/3. The protein operates within cofactor biosynthesis; pyridoxine 5'-phosphate biosynthesis; pyridoxine 5'-phosphate from D-erythrose 4-phosphate: step 3/5. Catalyzes the reversible conversion of 3-phosphohydroxypyruvate to phosphoserine and of 3-hydroxy-2-oxo-4-phosphonooxybutanoate to phosphohydroxythreonine. The chain is Phosphoserine aminotransferase from Burkholderia cenocepacia (strain HI2424).